The following is a 506-amino-acid chain: NADH-quinone oxidoreductase subunit N (506 aa).

The next 14 helical transmembrane spans lie at 14–34, 40–60, 72–92, 109–129, 131–151, 166–186, 209–229, 256–276, 286–306, 314–334, 343–363, 385–405, 420–440, and 465–485; these read MVPE…DLFF, YVAL…ITLY, FVLD…AALI, GEYY…ASSV, FVTL…LVGI, VING…LYGI, LLLA…IATV, MAGF…VSVQ, MSIY…VVAL, LFAY…VALS, FYML…HGLI, AIVM…AGFI, AHYV…VYYF, and IVMS…MIGY.

It belongs to the complex I subunit 2 family. NDH-1 is composed of 14 different subunits. Subunits NuoA, H, J, K, L, M, N constitute the membrane sector of the complex.

Its subcellular location is the cell membrane. It carries out the reaction a quinone + NADH + 5 H(+)(in) = a quinol + NAD(+) + 4 H(+)(out). Its function is as follows. NDH-1 shuttles electrons from NADH, via FMN and iron-sulfur (Fe-S) centers, to quinones in the respiratory chain. The immediate electron acceptor for the enzyme in this species is believed to be a menaquinone. Couples the redox reaction to proton translocation (for every two electrons transferred, four hydrogen ions are translocated across the cytoplasmic membrane), and thus conserves the redox energy in a proton gradient. This chain is NADH-quinone oxidoreductase subunit N, found in Bacillus anthracis.